Here is a 47-residue protein sequence, read N- to C-terminus: Sperm protamine P1 (47 aa).

This sequence belongs to the protamine P1 family. Testis.

It localises to the nucleus. It is found in the chromosome. In terms of biological role, protamines substitute for histones in the chromatin of sperm during the haploid phase of spermatogenesis. They compact sperm DNA into a highly condensed, stable and inactive complex. The polypeptide is Sperm protamine P1 (PRM1) (Orcinus orca (Killer whale)).